Here is an 828-residue protein sequence, read N- to C-terminus: Periplasmic nitrate reductase (828 aa).

A signal peptide (tat-type signal) is located at residues 1–31 (MKLSRRSFMKANAVAAAAAAAGLSVPGVARA). The region spanning 39 to 95 (IKWDKAPCRFCGTGCGVLVGTQQGRVVACQGDPDAPVNRGLNCIKGYFLPKIMYGKD) is the 4Fe-4S Mo/W bis-MGD-type domain. Residues Cys-46, Cys-49, Cys-53, and Cys-81 each coordinate [4Fe-4S] cluster. Residues Lys-83, Gln-150, Asn-175, Cys-179, 212–219 (WGANMAEM), 243–247 (STYQH), 262–264 (QSD), Met-372, Gln-376, Asn-482, 508–509 (SD), Lys-531, Asp-558, and 718–727 (TGRVLEHWHT) contribute to the Mo-bis(molybdopterin guanine dinucleotide) site. Position 794 (Phe-794) interacts with substrate. 2 residues coordinate Mo-bis(molybdopterin guanine dinucleotide): Asn-802 and Lys-819.

Belongs to the prokaryotic molybdopterin-containing oxidoreductase family. NasA/NapA/NarB subfamily. Component of the periplasmic nitrate reductase NapAB complex composed of NapA and NapB. It depends on [4Fe-4S] cluster as a cofactor. The cofactor is Mo-bis(molybdopterin guanine dinucleotide). Post-translationally, predicted to be exported by the Tat system. The position of the signal peptide cleavage has not been experimentally proven.

The protein localises to the periplasm. It catalyses the reaction 2 Fe(II)-[cytochrome] + nitrate + 2 H(+) = 2 Fe(III)-[cytochrome] + nitrite + H2O. In terms of biological role, catalytic subunit of the periplasmic nitrate reductase complex NapAB. Receives electrons from NapB and catalyzes the reduction of nitrate to nitrite. The sequence is that of Periplasmic nitrate reductase from Escherichia coli (strain K12 / MC4100 / BW2952).